A 1050-amino-acid chain; its full sequence is Atrial natriuretic peptide receptor 2 (1050 aa).

An N-terminal signal peptide occupies residues Met-1–Cys-19. Residues Arg-20–Leu-460 lie on the Extracellular side of the membrane. 2 N-linked (GlcNAc...) asparagine glycosylation sites follow: Asn-26 and Asn-74. A disulfide bridge connects residues Cys-84 and Cys-110. 6 N-linked (GlcNAc...) asparagine glycosylation sites follow: Asn-169, Asn-203, Asn-285, Asn-352, Asn-366, and Asn-415. Cys-236 and Cys-339 are oxidised to a cystine. The helical transmembrane segment at Gly-461–Ile-481 threads the bilayer. Topologically, residues Tyr-482 to Ile-1050 are cytoplasmic. Residues Ser-517–Val-790 form the Protein kinase domain. The region spanning Thr-865–Glu-995 is the Guanylate cyclase domain.

Belongs to the adenylyl cyclase class-4/guanylyl cyclase family. Phosphorylated. Phosphorylation of the protein kinase-like domain is required for full activation by CNP. Post-translationally, glycosylated. In terms of tissue distribution, high levels found in liver, atrium and gill. Moderate levels found in brain and ventricle, and low levels in esophageal sphincter, stomach, posterior intestine and kidney.

The protein localises to the cell membrane. It catalyses the reaction GTP = 3',5'-cyclic GMP + diphosphate. Functionally, receptor for the C-type natriuretic peptide NPPC/CNP hormone. Has guanylate cyclase activity upon binding of its ligand. May play a role in the regulation of skeletal growth. The protein is Atrial natriuretic peptide receptor 2 (npr2) of Anguilla japonica (Japanese eel).